A 247-amino-acid polypeptide reads, in one-letter code: Mannose-specific lectin CML-2 (247 aa).

2 residues coordinate a carbohydrate: Asp87 and Gly107. N-linked (GlcNAc...) asparagine glycosylation is present at Asn119. Residues Glu129 and Asp131 each contribute to the Mn(2+) site. Residues Asp131 and Phe133 each contribute to the Ca(2+) site. The a carbohydrate site is built by Ser138 and Asn139. The Ca(2+) site is built by Asn139 and Asp142. The Mn(2+) site is built by Asp142 and His147. A carbohydrate-binding residues include Gly221, Glu222, and Gln223.

This sequence belongs to the leguminous lectin family. As to quaternary structure, homodimer; non-covalently linked. In terms of processing, glycosylated.

Its function is as follows. Mannose-specific lectin. Also binds alpha-methyl-D-mannoside, D-glucose, N-acetyl-D-glucosamine and sucrose but not D-galactose, D-arabinose, D-fructose, D-xylose, lactose or glycoproteins fetiun, PSM and ovalbumin. Shows agglutinating activity towards rabbit erythrocytes. The chain is Mannose-specific lectin CML-2 from Centrolobium microchaete (Canarywood tree).